We begin with the raw amino-acid sequence, 98 residues long: Large ribosomal subunit protein bL25 (98 aa).

A disordered region spans residues 1-23 (MANFVLNAQARAEDKQGKGASRR).

The protein belongs to the bacterial ribosomal protein bL25 family. As to quaternary structure, part of the 50S ribosomal subunit; part of the 5S rRNA/L5/L18/L25 subcomplex. Contacts the 5S rRNA. Binds to the 5S rRNA independently of L5 and L18.

This is one of the proteins that binds to the 5S RNA in the ribosome where it forms part of the central protuberance. The protein is Large ribosomal subunit protein bL25 of Acinetobacter baumannii (strain ATCC 17978 / DSM 105126 / CIP 53.77 / LMG 1025 / NCDC KC755 / 5377).